The sequence spans 186 residues: Potassium-transporting ATPase KdpC subunit (186 aa).

Residues 10-30 (LTIITMVLCGFLFPLAITLIG) form a helical membrane-spanning segment.

Belongs to the KdpC family. As to quaternary structure, the system is composed of three essential subunits: KdpA, KdpB and KdpC.

The protein localises to the cell membrane. Part of the high-affinity ATP-driven potassium transport (or Kdp) system, which catalyzes the hydrolysis of ATP coupled with the electrogenic transport of potassium into the cytoplasm. This subunit acts as a catalytic chaperone that increases the ATP-binding affinity of the ATP-hydrolyzing subunit KdpB by the formation of a transient KdpB/KdpC/ATP ternary complex. In Staphylococcus aureus (strain MSSA476), this protein is Potassium-transporting ATPase KdpC subunit.